A 341-amino-acid polypeptide reads, in one-letter code: Very-long-chain 3-oxoacyl-CoA reductase (341 aa).

Residues 15 to 35 (VVTAFSVIGIVFTILKFTSFA) traverse the membrane as a helical segment. Residues V61, D115, N142, K177, Y216, K220, V249, and S251 each coordinate NADP(+). The active-site Proton donor is Y216. The Lowers pKa of active site Tyr role is filled by K220.

Belongs to the short-chain dehydrogenases/reductases (SDR) family.

It localises to the endoplasmic reticulum membrane. The catalysed reaction is a very-long-chain (3R)-3-hydroxyacyl-CoA + NADP(+) = a very-long-chain 3-oxoacyl-CoA + NADPH + H(+). The protein operates within lipid metabolism; fatty acid biosynthesis. Functionally, component of the microsomal membrane bound fatty acid elongation system, which produces the 26-carbon very long-chain fatty acids (VLCFA) from palmitate. Catalyzes the reduction of the 3-ketoacyl-CoA intermediate that is formed in each cycle of fatty acid elongation. VLCFAs serve as precursors for ceramide and sphingolipids. This Schizosaccharomyces pombe (strain 972 / ATCC 24843) (Fission yeast) protein is Very-long-chain 3-oxoacyl-CoA reductase.